We begin with the raw amino-acid sequence, 670 residues long: UvrABC system protein B (670 aa).

One can recognise a Helicase ATP-binding domain in the interval 26-183; the sequence is EGLEDGLAHQ…RRLAELQYSR (158 aa). ATP is bound at residue 39 to 46; sequence GVTGSGKT. The Beta-hairpin motif lies at 92 to 115; the sequence is YYDYYQPEAYVPSSDTFIEKDASV. Residues 431-597 form the Helicase C-terminal domain; sequence QVDDLLSEIR…GLNKKISDIL (167 aa). Positions 630-665 constitute a UVR domain; it reads ELKIRELESKMLTHAQNLEFEEAAALRDELQALRAQ.

The protein belongs to the UvrB family. Forms a heterotetramer with UvrA during the search for lesions. Interacts with UvrC in an incision complex.

Its subcellular location is the cytoplasm. Functionally, the UvrABC repair system catalyzes the recognition and processing of DNA lesions. A damage recognition complex composed of 2 UvrA and 2 UvrB subunits scans DNA for abnormalities. Upon binding of the UvrA(2)B(2) complex to a putative damaged site, the DNA wraps around one UvrB monomer. DNA wrap is dependent on ATP binding by UvrB and probably causes local melting of the DNA helix, facilitating insertion of UvrB beta-hairpin between the DNA strands. Then UvrB probes one DNA strand for the presence of a lesion. If a lesion is found the UvrA subunits dissociate and the UvrB-DNA preincision complex is formed. This complex is subsequently bound by UvrC and the second UvrB is released. If no lesion is found, the DNA wraps around the other UvrB subunit that will check the other stand for damage. This is UvrABC system protein B from Pectobacterium carotovorum subsp. carotovorum (strain PC1).